A 413-amino-acid polypeptide reads, in one-letter code: Phosphopentomutase (413 aa).

Mn(2+)-binding residues include Asp-11, Asp-306, His-311, Asp-347, His-348, and His-359.

This sequence belongs to the phosphopentomutase family. Mn(2+) serves as cofactor.

It localises to the cytoplasm. It catalyses the reaction 2-deoxy-alpha-D-ribose 1-phosphate = 2-deoxy-D-ribose 5-phosphate. The enzyme catalyses alpha-D-ribose 1-phosphate = D-ribose 5-phosphate. It functions in the pathway carbohydrate degradation; 2-deoxy-D-ribose 1-phosphate degradation; D-glyceraldehyde 3-phosphate and acetaldehyde from 2-deoxy-alpha-D-ribose 1-phosphate: step 1/2. Its function is as follows. Isomerase that catalyzes the conversion of deoxy-ribose 1-phosphate (dRib-1-P) and ribose 1-phosphate (Rib-1-P) to deoxy-ribose 5-phosphate (dRib-5-P) and ribose 5-phosphate (Rib-5-P), respectively. This is Phosphopentomutase from Helicobacter pylori (strain Shi470).